The chain runs to 203 residues: Lectin (203 aa).

Positions 1-20 (MINILHVIAGLALASVGVDA) are cleaved as a signal peptide. Residues 21–53 (RQVGVGADVLHAVENTIDSITGVEASHSALEVG) constitute a propeptide that is removed on maturation.

As to quaternary structure, monomer.

N-acetyl-D-glucosamine-specific lectin. Specifically agglutinates rabbit erythrocytes. The polypeptide is Lectin (UPL1) (Ulva pertusa (Sea lettuce)).